Here is a 435-residue protein sequence, read N- to C-terminus: 3-phosphoshikimate 1-carboxyvinyltransferase (435 aa).

3 residues coordinate 3-phosphoshikimate: Lys-22, Ser-23, and Arg-27. Phosphoenolpyruvate is bound at residue Lys-22. Positions 94 and 122 each coordinate phosphoenolpyruvate. 3-phosphoshikimate-binding residues include Ser-166, Gln-168, Asp-314, and Lys-341. Phosphoenolpyruvate is bound at residue Gln-168. The active-site Proton acceptor is the Asp-314. Arg-345 and Arg-388 together coordinate phosphoenolpyruvate.

This sequence belongs to the EPSP synthase family. In terms of assembly, monomer.

It is found in the cytoplasm. The enzyme catalyses 3-phosphoshikimate + phosphoenolpyruvate = 5-O-(1-carboxyvinyl)-3-phosphoshikimate + phosphate. Its pathway is metabolic intermediate biosynthesis; chorismate biosynthesis; chorismate from D-erythrose 4-phosphate and phosphoenolpyruvate: step 6/7. Catalyzes the transfer of the enolpyruvyl moiety of phosphoenolpyruvate (PEP) to the 5-hydroxyl of shikimate-3-phosphate (S3P) to produce enolpyruvyl shikimate-3-phosphate and inorganic phosphate. This is 3-phosphoshikimate 1-carboxyvinyltransferase from Ruthia magnifica subsp. Calyptogena magnifica.